The primary structure comprises 509 residues: ESX-2 secretion system protein eccD2 (509 aa).

Transmembrane regions (helical) follow at residues L135 to L155, A170 to W190, L196 to P216, A222 to A242, Q248 to V268, I281 to V301, V364 to L384, P389 to G409, A418 to L438, L449 to V469, and V487 to L507.

It belongs to the EccD/Snm4 family. As to quaternary structure, part of the ESX-2 / type VII secretion system (T7SS), which is composed of cytosolic and membrane components.

It localises to the cell membrane. In Mycobacterium tuberculosis (strain CDC 1551 / Oshkosh), this protein is ESX-2 secretion system protein eccD2 (eccD2).